The following is a 372-amino-acid chain: Chaperone protein DnaJ (372 aa).

A J domain is found at 5 to 70 (DYYDLLEVGR…EKRAGYDRYG (66 aa)). The CR-type zinc finger occupies 134–212 (GIQAPIHYVT…CGGSGRRRDE (79 aa)). C147, C150, C164, C167, C186, C189, C200, and C203 together coordinate Zn(2+). CXXCXGXG motif repeat units lie at residues 147–154 (CDTCQGTG), 164–171 (CHTCQGSG), 186–193 (CTTCYGEG), and 200–207 (CKKCGGSG).

This sequence belongs to the DnaJ family. As to quaternary structure, homodimer. The cofactor is Zn(2+).

The protein resides in the cytoplasm. Participates actively in the response to hyperosmotic and heat shock by preventing the aggregation of stress-denatured proteins and by disaggregating proteins, also in an autonomous, DnaK-independent fashion. Unfolded proteins bind initially to DnaJ; upon interaction with the DnaJ-bound protein, DnaK hydrolyzes its bound ATP, resulting in the formation of a stable complex. GrpE releases ADP from DnaK; ATP binding to DnaK triggers the release of the substrate protein, thus completing the reaction cycle. Several rounds of ATP-dependent interactions between DnaJ, DnaK and GrpE are required for fully efficient folding. Also involved, together with DnaK and GrpE, in the DNA replication of plasmids through activation of initiation proteins. The sequence is that of Chaperone protein DnaJ from Wolbachia sp. subsp. Drosophila simulans (strain wRi).